A 405-amino-acid chain; its full sequence is Probable dual-specificity RNA methyltransferase RlmN (405 aa).

Residues 1-15 are compositionally biased toward low complexity; it reads MSSTGSSVSTSGLVL. Residues 1 to 34 are disordered; the sequence is MSSTGSSVSTSGLVLPSTPLAEPGKEVPLVVNTP. Glu130 functions as the Proton acceptor in the catalytic mechanism. The region spanning 142-386 is the Radical SAM core domain; the sequence is SAARATLCLS…VTVRDTRGSE (245 aa). A disulfide bridge links Cys149 with Cys391. The [4Fe-4S] cluster site is built by Cys156, Cys160, and Cys163. S-adenosyl-L-methionine-binding positions include 211–212, Ser245, 268–270, and Asn348; these read GE and SLH. Residue Cys391 is the S-methylcysteine intermediate of the active site.

This sequence belongs to the radical SAM superfamily. RlmN family. [4Fe-4S] cluster serves as cofactor.

It is found in the cytoplasm. It catalyses the reaction adenosine(2503) in 23S rRNA + 2 reduced [2Fe-2S]-[ferredoxin] + 2 S-adenosyl-L-methionine = 2-methyladenosine(2503) in 23S rRNA + 5'-deoxyadenosine + L-methionine + 2 oxidized [2Fe-2S]-[ferredoxin] + S-adenosyl-L-homocysteine. The enzyme catalyses adenosine(37) in tRNA + 2 reduced [2Fe-2S]-[ferredoxin] + 2 S-adenosyl-L-methionine = 2-methyladenosine(37) in tRNA + 5'-deoxyadenosine + L-methionine + 2 oxidized [2Fe-2S]-[ferredoxin] + S-adenosyl-L-homocysteine. In terms of biological role, specifically methylates position 2 of adenine 2503 in 23S rRNA and position 2 of adenine 37 in tRNAs. This is Probable dual-specificity RNA methyltransferase RlmN from Cutibacterium acnes (strain DSM 16379 / KPA171202) (Propionibacterium acnes).